Reading from the N-terminus, the 70-residue chain is MPEDKKAAAKVEPLRKTRPCPECGKPSNREHYPFCSNRCREADLSRWLTGAYAIPVADDETKAEYPDGEN.

The span at 1–15 (MPEDKKAAAKVEPLR) shows a compositional bias: basic and acidic residues. The disordered stretch occupies residues 1-22 (MPEDKKAAAKVEPLRKTRPCPE). 4 residues coordinate Zn(2+): C20, C23, C35, and C39.

It belongs to the DNA gyrase inhibitor YacG family. In terms of assembly, interacts with GyrB. Zn(2+) serves as cofactor.

Functionally, inhibits all the catalytic activities of DNA gyrase by preventing its interaction with DNA. Acts by binding directly to the C-terminal domain of GyrB, which probably disrupts DNA binding by the gyrase. The sequence is that of DNA gyrase inhibitor YacG from Rhizobium johnstonii (strain DSM 114642 / LMG 32736 / 3841) (Rhizobium leguminosarum bv. viciae).